A 142-amino-acid chain; its full sequence is Large ribosomal subunit protein uL11 (142 aa).

The protein belongs to the universal ribosomal protein uL11 family. Part of the ribosomal stalk of the 50S ribosomal subunit. Interacts with L10 and the large rRNA to form the base of the stalk. L10 forms an elongated spine to which L12 dimers bind in a sequential fashion forming a multimeric L10(L12)X complex. In terms of processing, one or more lysine residues are methylated.

Functionally, forms part of the ribosomal stalk which helps the ribosome interact with GTP-bound translation factors. The protein is Large ribosomal subunit protein uL11 of Shewanella loihica (strain ATCC BAA-1088 / PV-4).